A 245-amino-acid polypeptide reads, in one-letter code: Chloride intracellular channel protein 2 (245 aa).

A required for insertion into the membrane region spans residues 1–96 (MASLALNTQA…EEFLEKTLAP (96 aa)). Glutamate 25 serves as a coordination point for glutathione. Positions 30-33 (CPFC) match the G-site motif. A disulfide bond links cysteine 30 and cysteine 33. Residues 32 to 52 (FCQRLFMILWLKGVKFNVTTI) form a helical membrane-spanning segment. A GST C-terminal domain is found at 76–239 (NKELKTDFIK…PEDKEIENTY (164 aa)). A glutathione-binding site is contributed by histidine 227.

The protein belongs to the chloride channel CLIC family. Monomer. Interacts with TRAPPC2 and RYR2.

The protein localises to the cytoplasm. The protein resides in the membrane. It carries out the reaction chloride(in) = chloride(out). It catalyses the reaction tert-butyl hydroperoxide + 2 glutathione = tert-butanol + glutathione disulfide + H2O. The catalysed reaction is cumene hydroperoxide + 2 glutathione = 2-phenylpropan-2-ol + glutathione disulfide + H2O. In the soluble state, catalyzes glutaredoxin-like thiol disulfide exchange reactions with reduced glutathione as electron donor. Displays weak glutathione peroxidase activity. Can insert into membranes and form chloride ion channels. Membrane insertion seems to be redox-regulated and may occur only under oxidizing conditions. Modulates the activity of RYR2 and inhibits calcium influx. The chain is Chloride intracellular channel protein 2 from Rattus norvegicus (Rat).